The chain runs to 225 residues: Cytidylate kinase (225 aa).

11–19 provides a ligand contact to ATP; that stretch reads GPAAAGKST.

The protein belongs to the cytidylate kinase family. Type 1 subfamily.

It is found in the cytoplasm. The enzyme catalyses CMP + ATP = CDP + ADP. The catalysed reaction is dCMP + ATP = dCDP + ADP. The chain is Cytidylate kinase from Bacillus cereus (strain B4264).